The following is a 249-amino-acid chain: MVDFRKFYKENANVAYTVLGYPNLQISEAFLQRLDQSPIDILELGVAYSDPIADGEIIADAAKIALDQGVDIHSVFELLARIKTKKALVFMVYYNLIFSYGLEKFVKKAKSLGICALIVPELSFEESDDLVKECEKYNIALITLVSVTTPKERVKKLVKHAKGFIYLLASIGITGTKSVEEAILQDKVKEIRSFTNLPIFVGFGIQNNQDVKRMRKVADGVIVGTSIVKYFKQENLDIIMKDIEEIFKK.

Catalysis depends on proton acceptor residues Glu43 and Asp54.

It belongs to the TrpA family. Tetramer of two alpha and two beta chains.

It carries out the reaction (1S,2R)-1-C-(indol-3-yl)glycerol 3-phosphate + L-serine = D-glyceraldehyde 3-phosphate + L-tryptophan + H2O. It participates in amino-acid biosynthesis; L-tryptophan biosynthesis; L-tryptophan from chorismate: step 5/5. Functionally, the alpha subunit is responsible for the aldol cleavage of indoleglycerol phosphate to indole and glyceraldehyde 3-phosphate. This is Tryptophan synthase alpha chain from Campylobacter jejuni subsp. doylei (strain ATCC BAA-1458 / RM4099 / 269.97).